The following is a 126-amino-acid chain: Gas vesicle protein J (126 aa).

This sequence belongs to the gas vesicle GvpA family. As to quaternary structure, interacts with GvpA.

Its subcellular location is the gas vesicle. Its function is as follows. A minor component of the gas vesicle, might be involved in nucleating gas vesicle formation. Gas vesicles (GV) are hollow, gas filled proteinaceous nanostructures. During planktonic growth they allow positioning of the organism at a favorable depth for light or nutrient acquisition. The polypeptide is Gas vesicle protein J (Pseudanabaena galeata (strain PCC 6901)).